The following is a 161-amino-acid chain: MSLIPNNWFNTGRRSNIFDPFSLDEIWDPFFGLPSTLSTVPRSETAAETAAFANARIDWKETPEAHVFKADLPGVKKEEVKVEVEDGNVLRISGQRAREKEEKNDTWHRVERSSGQFMRKFRLPENAKVDQVKAGMENGVLTVTVPKNEAPKPQVKAINVY.

Positions 48 to 161 (ETAAFANARI…KPQVKAINVY (114 aa)) constitute a sHSP domain.

The protein belongs to the small heat shock protein (HSP20) family. Forms oligomeric structures.

The protein resides in the cytoplasm. This is 18.3 kDa class I heat shock protein (HSP18) from Oxybasis rubra (Red goosefoot).